A 365-amino-acid chain; its full sequence is Isopentenyl-diphosphate delta-isomerase (365 aa).

8 to 9 is a binding site for substrate; the sequence is RK. FMN contacts are provided by residues 67-69, Ser97, and Asn126; that span reads SIT. Residue 97–99 coordinates substrate; it reads SQR. Gln160 provides a ligand contact to substrate. Residue Glu161 coordinates Mg(2+). FMN-binding positions include Lys192, Thr222, 272–274, and 293–294; these read GVR and AL.

The protein belongs to the IPP isomerase type 2 family. As to quaternary structure, homooctamer. Dimer of tetramers. Requires FMN as cofactor. NADPH serves as cofactor. The cofactor is Mg(2+).

It is found in the cytoplasm. It carries out the reaction isopentenyl diphosphate = dimethylallyl diphosphate. Involved in the biosynthesis of isoprenoids. Catalyzes the 1,3-allylic rearrangement of the homoallylic substrate isopentenyl (IPP) to its allylic isomer, dimethylallyl diphosphate (DMAPP). The polypeptide is Isopentenyl-diphosphate delta-isomerase (Methanosarcina acetivorans (strain ATCC 35395 / DSM 2834 / JCM 12185 / C2A)).